We begin with the raw amino-acid sequence, 553 residues long: Urocanate hydratase (553 aa).

Residues 45–46 (GG), Gln-123, 169–171 (GMG), Asp-189, Arg-194, 235–236 (NA), 256–260 (QTSAH), 266–267 (YV), Tyr-315, and Gly-485 contribute to the NAD(+) site.

It belongs to the urocanase family. It depends on NAD(+) as a cofactor.

The protein localises to the cytoplasm. The enzyme catalyses 4-imidazolone-5-propanoate = trans-urocanate + H2O. It participates in amino-acid degradation; L-histidine degradation into L-glutamate; N-formimidoyl-L-glutamate from L-histidine: step 2/3. In terms of biological role, catalyzes the conversion of urocanate to 4-imidazolone-5-propionate. The sequence is that of Urocanate hydratase from Staphylococcus saprophyticus subsp. saprophyticus (strain ATCC 15305 / DSM 20229 / NCIMB 8711 / NCTC 7292 / S-41).